A 430-amino-acid chain; its full sequence is Na(+)/H(+) antiporter NhaA 2 (430 aa).

10 helical membrane passes run 11 to 31, 60 to 80, 97 to 117, 127 to 147, 181 to 201, 215 to 235, 288 to 308, 309 to 329, 356 to 376, and 393 to 413; these read FVHGESFAGLLLVGTALIAFI, LSLEHWVNDGLMAVFFLLVGL, VALAVTAALGGMLVPAALYTA, GWGVPMSTDIAFALGVLALLG, LNLTFLTLAALTWGAALYAGW, VLLWFFVLKSGLHATIAGVLL, HALHPFVTFLVLPVFALTNAG, VPVAAGGFGSVSLGVLLGLLL, WGHMVGSGLLAGIGFTMSLFV, and GVLLASVLAALLGAGWLLLGI.

This sequence belongs to the NhaA Na(+)/H(+) (TC 2.A.33) antiporter family.

The protein resides in the cell membrane. The catalysed reaction is Na(+)(in) + 2 H(+)(out) = Na(+)(out) + 2 H(+)(in). In terms of biological role, na(+)/H(+) antiporter that extrudes sodium in exchange for external protons. In Deinococcus geothermalis (strain DSM 11300 / CIP 105573 / AG-3a), this protein is Na(+)/H(+) antiporter NhaA 2.